We begin with the raw amino-acid sequence, 60 residues long: Bacteriochlorophyll c-binding protein (60 aa).

An N-formylmethionine modification is found at Met1. His25 provides a ligand contact to a bacteriochlorophyll c.

Belongs to the BChl C/E-binding protein family.

The protein localises to the chlorosome. The protein resides in the chlorosome envelope. Component of the photosynthetic apparatus. The light harvesting B740 complex binds bacteriochlorophyll c. This chain is Bacteriochlorophyll c-binding protein (csmA), found in Pelodictyon luteolum.